Reading from the N-terminus, the 160-residue chain is NADH-quinone oxidoreductase subunit I (160 aa).

2 4Fe-4S ferredoxin-type domains span residues 51 to 80 (RRYK…IEAA) and 91 to 120 (TKYD…EGPN). Positions 60, 63, 66, 70, 100, 103, 106, and 110 each coordinate [4Fe-4S] cluster.

It belongs to the complex I 23 kDa subunit family. As to quaternary structure, NDH-1 is composed of 14 different subunits. Subunits NuoA, H, J, K, L, M, N constitute the membrane sector of the complex. Requires [4Fe-4S] cluster as cofactor.

It localises to the cell inner membrane. The catalysed reaction is a quinone + NADH + 5 H(+)(in) = a quinol + NAD(+) + 4 H(+)(out). In terms of biological role, NDH-1 shuttles electrons from NADH, via FMN and iron-sulfur (Fe-S) centers, to quinones in the respiratory chain. The immediate electron acceptor for the enzyme in this species is believed to be ubiquinone. Couples the redox reaction to proton translocation (for every two electrons transferred, four hydrogen ions are translocated across the cytoplasmic membrane), and thus conserves the redox energy in a proton gradient. This is NADH-quinone oxidoreductase subunit I from Neorickettsia sennetsu (strain ATCC VR-367 / Miyayama) (Ehrlichia sennetsu).